A 106-amino-acid chain; its full sequence is EspC protein homolog (106 aa).

It belongs to the EspC family.

This chain is EspC protein homolog, found in Mycobacterium leprae (strain TN).